A 172-amino-acid chain; its full sequence is Small ribosomal subunit protein uS5 (172 aa).

Residues 17 to 80 (FTEKLIKLNR…ERAKRSMVLF (64 aa)) form the S5 DRBM domain.

Belongs to the universal ribosomal protein uS5 family. Part of the 30S ribosomal subunit. Contacts proteins S4 and S8.

Functionally, with S4 and S12 plays an important role in translational accuracy. In terms of biological role, located at the back of the 30S subunit body where it stabilizes the conformation of the head with respect to the body. This Treponema pallidum (strain Nichols) protein is Small ribosomal subunit protein uS5.